The primary structure comprises 259 residues: Chloroplastic import inner membrane translocase subunit HP30-2 (259 aa).

The next 4 helical transmembrane spans lie at Ala-55–Leu-75, Asn-108–Lys-124, Ala-135–Gly-155, and Met-158–Gly-178.

This sequence belongs to the Tim17/Tim22/Tim23 family. In terms of assembly, probable component of a protein-conducting channel made of HP30-1, HP30-2 and HP20 that mediates the import of transit sequence-less proteins into the chloroplastic inner membrane. Interacts with CEQORH.

It localises to the mitochondrion membrane. The protein localises to the plastid. The protein resides in the chloroplast inner membrane. In terms of biological role, together with HP30-1 and HP20, triggers the import and insertion of transit sequence-less multi-pass transmembrane proteins (e.g. CEQORH) into the chloroplastic inner membrane. The polypeptide is Chloroplastic import inner membrane translocase subunit HP30-2 (Arabidopsis thaliana (Mouse-ear cress)).